Consider the following 449-residue polypeptide: Deoxyguanosinetriphosphate triphosphohydrolase-like protein (449 aa).

Residues 1–27 (MTSSVWQERRHGEDKQRRNDHRSPYQR) form a disordered region. Positions 7-27 (QERRHGEDKQRRNDHRSPYQR) are enriched in basic and acidic residues. Positions 59–255 (RLTHSLEVSQ…MELADDIAYA (197 aa)) constitute an HD domain.

The protein belongs to the dGTPase family. Type 2 subfamily.

The polypeptide is Deoxyguanosinetriphosphate triphosphohydrolase-like protein (Shewanella baltica (strain OS185)).